The chain runs to 387 residues: Formate-dependent phosphoribosylglycinamide formyltransferase (387 aa).

N(1)-(5-phospho-beta-D-ribosyl)glycinamide is bound by residues E12–L13 and E72. ATP-binding positions include R104, K145, S150 to Q155, E185 to I188, and E193. Positions D109–L300 constitute an ATP-grasp domain. E258 and E270 together coordinate Mg(2+). Residues D277, K347, and R354 to R355 each bind N(1)-(5-phospho-beta-D-ribosyl)glycinamide.

It belongs to the PurK/PurT family. Homodimer.

The catalysed reaction is N(1)-(5-phospho-beta-D-ribosyl)glycinamide + formate + ATP = N(2)-formyl-N(1)-(5-phospho-beta-D-ribosyl)glycinamide + ADP + phosphate + H(+). It participates in purine metabolism; IMP biosynthesis via de novo pathway; N(2)-formyl-N(1)-(5-phospho-D-ribosyl)glycinamide from N(1)-(5-phospho-D-ribosyl)glycinamide (formate route): step 1/1. Functionally, involved in the de novo purine biosynthesis. Catalyzes the transfer of formate to 5-phospho-ribosyl-glycinamide (GAR), producing 5-phospho-ribosyl-N-formylglycinamide (FGAR). Formate is provided by PurU via hydrolysis of 10-formyl-tetrahydrofolate. The chain is Formate-dependent phosphoribosylglycinamide formyltransferase from Anaeromyxobacter dehalogenans (strain 2CP-C).